The primary structure comprises 271 residues: HTH-type transcriptional repressor AllR (271 aa).

One can recognise an HTH iclR-type domain in the interval 21 to 83; the sequence is AQALERGIAI…SQLGWWHIGL (63 aa). Residues 43 to 62 constitute a DNA-binding region (H-T-H motif); that stretch reads VSDISLNLDLPLSTTFRLLK. The 170-residue stretch at 98–267 folds into the IclR-ED domain; sequence VLSVAGPFMR…ARDISTALGL (170 aa). Residues 154–156, D207, C217, and 234–236 contribute to the glyoxylate site; these read SGA and SIS.

Its function is as follows. Negative regulator of allantoin and glyoxylate utilization operons. Binds to the gcl promoter and to the allS-allA intergenic region. The chain is HTH-type transcriptional repressor AllR (allR) from Escherichia coli (strain UTI89 / UPEC).